The sequence spans 248 residues: Probable transcriptional regulatory protein BOV_1660 (248 aa).

The protein belongs to the TACO1 family.

It localises to the cytoplasm. This is Probable transcriptional regulatory protein BOV_1660 from Brucella ovis (strain ATCC 25840 / 63/290 / NCTC 10512).